The primary structure comprises 129 residues: Small ribosomal subunit protein uS11 (129 aa).

Belongs to the universal ribosomal protein uS11 family. Part of the 30S ribosomal subunit. Interacts with proteins S7 and S18. Binds to IF-3.

In terms of biological role, located on the platform of the 30S subunit, it bridges several disparate RNA helices of the 16S rRNA. Forms part of the Shine-Dalgarno cleft in the 70S ribosome. This is Small ribosomal subunit protein uS11 from Desulforamulus reducens (strain ATCC BAA-1160 / DSM 100696 / MI-1) (Desulfotomaculum reducens).